Consider the following 298-residue polypeptide: 4-diphosphocytidyl-2-C-methyl-D-erythritol kinase (298 aa).

The active site involves Lys15. 102–112 (PVAAGIGGGSS) contributes to the ATP binding site. Asp142 is a catalytic residue.

The protein belongs to the GHMP kinase family. IspE subfamily.

It catalyses the reaction 4-CDP-2-C-methyl-D-erythritol + ATP = 4-CDP-2-C-methyl-D-erythritol 2-phosphate + ADP + H(+). Its pathway is isoprenoid biosynthesis; isopentenyl diphosphate biosynthesis via DXP pathway; isopentenyl diphosphate from 1-deoxy-D-xylulose 5-phosphate: step 3/6. Functionally, catalyzes the phosphorylation of the position 2 hydroxy group of 4-diphosphocytidyl-2C-methyl-D-erythritol. This Hyphomonas neptunium (strain ATCC 15444) protein is 4-diphosphocytidyl-2-C-methyl-D-erythritol kinase.